Consider the following 61-residue polypeptide: Small ribosomal subunit protein uS14 (61 aa).

The Zn(2+) site is built by C24, C27, C40, and C43.

Belongs to the universal ribosomal protein uS14 family. Zinc-binding uS14 subfamily. Part of the 30S ribosomal subunit. Contacts proteins S3 and S10. It depends on Zn(2+) as a cofactor.

Its function is as follows. Binds 16S rRNA, required for the assembly of 30S particles and may also be responsible for determining the conformation of the 16S rRNA at the A site. The sequence is that of Small ribosomal subunit protein uS14 from Dictyoglomus turgidum (strain DSM 6724 / Z-1310).